The following is a 161-amino-acid chain: Allophycocyanin alpha chain 2 (161 aa).

At N71 the chain carries N4-methylasparagine. C81 lines the (2R,3E)-phycocyanobilin pocket.

Belongs to the phycobiliprotein family. Component of the phycobilisome. Heterodimer of an alpha and a beta chain. In terms of processing, contains one covalently linked bilin chromophore.

The protein resides in the cellular thylakoid membrane. Light-harvesting photosynthetic bile pigment-protein from the phycobiliprotein complex. Allophycocyanin has a maximum absorption at approximately 650 nanometers. The polypeptide is Allophycocyanin alpha chain 2 (apcA2) (Microchaete diplosiphon (Fremyella diplosiphon)).